Reading from the N-terminus, the 384-residue chain is Dual specificity protein phosphatase 9 (384 aa).

Position 16 is a phosphoserine (S16). One can recognise a Rhodanese domain in the interval 18-139; that stretch reads PRPRLLLLDC…FQAECPHLCE (122 aa). Residues 203–346 form the Tyrosine-protein phosphatase domain; sequence FPVQILPNLY…LLDFERSLRL (144 aa). S262 bears the Phosphoserine mark. Catalysis depends on C290, which acts as the Phosphocysteine intermediate. The tract at residues 348-384 is disordered; it reads ERHSQEQGSGGQASAASNPPSFFTTPTSDGAFELAPT. At S351 the chain carries Phosphoserine. Residues 359–375 show a composition bias toward polar residues; it reads QASAASNPPSFFTTPTS.

It belongs to the protein-tyrosine phosphatase family. Non-receptor class dual specificity subfamily.

Its subcellular location is the cytoplasm. It catalyses the reaction O-phospho-L-tyrosyl-[protein] + H2O = L-tyrosyl-[protein] + phosphate. It carries out the reaction O-phospho-L-seryl-[protein] + H2O = L-seryl-[protein] + phosphate. The enzyme catalyses O-phospho-L-threonyl-[protein] + H2O = L-threonyl-[protein] + phosphate. Inactivates MAP kinases. Has a specificity for the ERK family. This is Dual specificity protein phosphatase 9 (DUSP9) from Homo sapiens (Human).